The sequence spans 558 residues: Trehalase 1 (558 aa).

The protein belongs to the glycosyl hydrolase 15 family.

The catalysed reaction is alpha,alpha-trehalose + H2O = alpha-D-glucose + beta-D-glucose. Its pathway is glycan degradation; trehalose degradation; D-glucose from alpha,alpha-trehalose: step 1/1. Catalyzes the hydrolysis of alpha,alpha-trehalose into two molecules of D-glucose. This Sulfolobus acidocaldarius (strain ATCC 33909 / DSM 639 / JCM 8929 / NBRC 15157 / NCIMB 11770) protein is Trehalase 1 (treH1).